Consider the following 481-residue polypeptide: Proline--tRNA ligase (481 aa).

This sequence belongs to the class-II aminoacyl-tRNA synthetase family. ProS type 3 subfamily. As to quaternary structure, homodimer.

It localises to the cytoplasm. The catalysed reaction is tRNA(Pro) + L-proline + ATP = L-prolyl-tRNA(Pro) + AMP + diphosphate. Catalyzes the attachment of proline to tRNA(Pro) in a two-step reaction: proline is first activated by ATP to form Pro-AMP and then transferred to the acceptor end of tRNA(Pro). In Thermococcus kodakarensis (strain ATCC BAA-918 / JCM 12380 / KOD1) (Pyrococcus kodakaraensis (strain KOD1)), this protein is Proline--tRNA ligase.